We begin with the raw amino-acid sequence, 931 residues long: Netrin receptor UNC5C (931 aa).

The first 40 residues, 1–40, serve as a signal peptide directing secretion; it reads MRKGLRATAARCGLGLGYLLQMLVLPALALLSASGTGSAA. The Extracellular segment spans residues 41-380; the sequence is QDDDFFHELP…APDSDDVALY (340 aa). An Ig-like domain is found at 62-159; the sequence is PHFLIEPEEA…AGTTKSRKAY (98 aa). 9 cysteine pairs are disulfide-bonded: C83/C144, C95/C142, C188/C239, C272/C309, C276/C313, C287/C299, C328/C362, C332/C367, and C340/C352. Residues 161–256 form the Ig-like C2-type domain; that stretch reads RIAYLRKTFE…KRKSTTATVI (96 aa). N-linked (GlcNAc...) asparagine glycosylation occurs at N236. 2 consecutive TSP type-1 domains span residues 260-314 and 316-368; these read NGGW…TLCP and DGRW…GLCM. The N-linked (GlcNAc...) asparagine glycan is linked to N361. A helical membrane pass occupies residues 381 to 401; that stretch reads VGIVIAVIVCLAISVVVALFV. The Cytoplasmic segment spans residues 402–931; sequence YRKNHRDFES…VVSLAAEGQY (530 aa). The interval 402–931 is required for netrin-mediated axon repulsion of neuronal growth cones; that stretch reads YRKNHRDFES…VVSLAAEGQY (530 aa). A Phosphoserine modification is found at S502. The ZU5 domain maps to 530 to 673; sequence CTAFGSFNSL…LSTYALVGHS (144 aa). A Phosphotyrosine modification is found at Y568. Residues 694-712 form an interaction with DCC region; the sequence is SLEYSIRVYCLDDTQDALK. A Death domain is found at 850-929; the sequence is QKLCSSLDAP…ETVVSLAAEG (80 aa).

It belongs to the unc-5 family. Interacts with DCC (via cytoplasmic domain). Interacts (tyrosine phosphorylated form) with PTPN11. Interacts (via extracellular domain) with FLRT3 (via extracellular domain). Interacts (via Ig-like C2-type domain) with DSCAM (via extracellular domain). Interacts (via death domain) with DAPK1. Interacts (via cytoplasmic domain) with TUBB3; this interaction is decreased by NTN1/Netrin-1. Proteolytically cleaved by caspases during apoptosis. The cleavage does not take place when the receptor is associated with netrin ligand. Its cleavage by caspases is required to induce apoptosis. In terms of processing, phosphorylated on different cytoplasmic tyrosine residues. Phosphorylation of Tyr-568 leads to an interaction with PTPN11 phosphatase, suggesting that its activity is regulated by phosphorylation/dephosphorylation. Tyrosine phosphorylation is netrin-dependent. Mainly expressed in brain. Expressed in temporal lobe cortical neurons and in neurons of the hippocampal pyramidal layer. Also expressed in kidney. Not expressed in developing or adult lung.

The protein resides in the cell membrane. It localises to the cell surface. It is found in the synapse. The protein localises to the synaptosome. Its subcellular location is the cell projection. The protein resides in the axon. It localises to the dendrite. It is found in the growth cone. The protein localises to the lamellipodium. Its subcellular location is the filopodium. Functionally, receptor for netrin required for axon guidance. Mediates axon repulsion of neuronal growth cones in the developing nervous system upon ligand binding. NTN1/Netrin-1 binding might cause dissociation of UNC5C from polymerized TUBB3 in microtubules and thereby lead to increased microtubule dynamics and axon repulsion. Axon repulsion in growth cones may also be caused by its association with DCC that may trigger signaling for repulsion. Might also collaborate with DSCAM in NTN1-mediated axon repulsion independently of DCC. Also involved in corticospinal tract axon guidance independently of DCC. Involved in dorsal root ganglion axon projection towards the spinal cord. It also acts as a dependence receptor required for apoptosis induction when not associated with netrin ligand. The chain is Netrin receptor UNC5C (UNC5C) from Homo sapiens (Human).